The chain runs to 721 residues: Polyribonucleotide nucleotidyltransferase (721 aa).

Positions 511 and 517 each coordinate Mg(2+). The region spanning 577 to 637 (PSTDFFHINP…SGVQAAREHI (61 aa)) is the KH domain. An S1 motif domain is found at 654–721 (GDIHKGIVKK…KGNKISLGIA (68 aa)).

Belongs to the polyribonucleotide nucleotidyltransferase family. Mg(2+) serves as cofactor.

It is found in the cytoplasm. The enzyme catalyses RNA(n+1) + phosphate = RNA(n) + a ribonucleoside 5'-diphosphate. Its function is as follows. Involved in mRNA degradation. Catalyzes the phosphorolysis of single-stranded polyribonucleotides processively in the 3'- to 5'-direction. In Sulfurimonas denitrificans (strain ATCC 33889 / DSM 1251) (Thiomicrospira denitrificans (strain ATCC 33889 / DSM 1251)), this protein is Polyribonucleotide nucleotidyltransferase.